The sequence spans 64 residues: Conotoxin Pu5.2 (64 aa).

The signal sequence occupies residues 1–22 (MRCVPVFVILLLLIASTPSVDA). A propeptide spanning residues 23 to 52 (RPNPKDDVPLASFHGADNANRILRTLWNLR) is cleaved from the precursor. Isoleucine amide is present on isoleucine 63.

The protein belongs to the conotoxin T superfamily. Contains 2 disulfide bonds that can be either 'C1-C3, C2-C4' or 'C1-C4, C2-C3', since these disulfide connectivities have been observed for conotoxins with cysteine framework V (for examples, see AC P0DQQ7 and AC P81755). In terms of tissue distribution, expressed by the venom duct.

It localises to the secreted. The protein is Conotoxin Pu5.2 of Conus pulicarius (Flea-bitten cone).